A 504-amino-acid polypeptide reads, in one-letter code: Cytochrome P450 2D9 (504 aa).

Serine 249 is modified (phosphoserine). Heme is bound at residue cysteine 446.

The protein belongs to the cytochrome P450 family. The cofactor is heme.

The protein localises to the endoplasmic reticulum membrane. Its subcellular location is the microsome membrane. It catalyses the reaction an organic molecule + reduced [NADPH--hemoprotein reductase] + O2 = an alcohol + oxidized [NADPH--hemoprotein reductase] + H2O + H(+). Its function is as follows. Cytochromes P450 are a group of heme-thiolate monooxygenases. In liver microsomes, this enzyme is involved in an NADPH-dependent electron transport pathway. It oxidizes a variety of structurally unrelated compounds, including steroids, fatty acids, and xenobiotics. The chain is Cytochrome P450 2D9 (Cyp2d9) from Mus musculus (Mouse).